The chain runs to 327 residues: tRNA uridine(34) hydroxylase (327 aa).

The Rhodanese domain maps to 123–217; the sequence is SDPEVLVVDT…YLEEVPQEQS (95 aa). Residue cysteine 177 is the Cysteine persulfide intermediate of the active site.

Belongs to the TrhO family.

The catalysed reaction is uridine(34) in tRNA + AH2 + O2 = 5-hydroxyuridine(34) in tRNA + A + H2O. Its function is as follows. Catalyzes oxygen-dependent 5-hydroxyuridine (ho5U) modification at position 34 in tRNAs. The sequence is that of tRNA uridine(34) hydroxylase from Vibrio cholerae serotype O1 (strain ATCC 39315 / El Tor Inaba N16961).